A 270-amino-acid chain; its full sequence is Tetraspanin-17 (270 aa).

The Cytoplasmic segment spans residues 1–19 (MPGKHQHFQEPEVGCCGKY). The chain crosses the membrane as a helical span at residues 20-40 (FLFGFNIVFWVLGALFLAIGL). At 41 to 63 (WAWSEKGVLSNISALTDLGGLDP) the chain is on the extracellular side. N51 carries N-linked (GlcNAc...) asparagine glycosylation. The chain crosses the membrane as a helical span at residues 64–84 (VWLFVVVGGVMSVLGFAGCIG). The Cytoplasmic segment spans residues 85–94 (ALRENTFLLK). A helical transmembrane segment spans residues 95–115 (FFSVFLGLIFFLELATGILAF). At 116–234 (VFKDWIRDQL…GQFEKWLQDN (119 aa)) the chain is on the extracellular side. 4 disulfide bridges follow: C155–C223, C156–C188, C172–C182, and C189–C202. The N-linked (GlcNAc...) asparagine glycan is linked to N171. Residues 235–255 (LIVVAGVFVGIALLQIFGICL) form a helical membrane-spanning segment. The Cytoplasmic segment spans residues 256–270 (AQNLVSDIKAVKANW).

It belongs to the tetraspanin (TM4SF) family. Interacts with ADAM10; the interaction influences ADAM10 substrate specificity, endocytosis and turnover.

Its subcellular location is the cell membrane. Its function is as follows. Part of TspanC8 subgroup, composed of 6 members that interact with the transmembrane metalloprotease ADAM10. This interaction is required for ADAM10 exit from the endoplasmic reticulum and for enzymatic maturation and trafficking to the cell surface as well as substrate specificity. Different TspanC8/ADAM10 complexes have distinct substrates. Seems to regulate VE-cadherin expression in endothelial cells probably through interaction with ADAM10, promoting leukocyte transmigration. The chain is Tetraspanin-17 (TSPAN17) from Bos taurus (Bovine).